The following is a 296-amino-acid chain: Biliverdin reductase A (296 aa).

The propeptide occupies 1 to 2; sequence MN. Residues 16–19, 44–46, 77–80, and Y98 each bind NADP(+); these read VGRA, SRR, and SSSH. The residue at position 174 (T174) is a Phosphothreonine. Residues S178 and S230 each carry the phosphoserine modification. 2 positions are modified to N6-acetyllysine: K248 and K253. Residues H280, C281, C292, and C293 each coordinate Zn(2+).

It belongs to the Gfo/Idh/MocA family. Biliverdin reductase subfamily. In terms of assembly, monomer. Zn(2+) is required as a cofactor. Liver.

Its subcellular location is the cytoplasm. It localises to the cytosol. It carries out the reaction (4Z,15Z)-bilirubin IXalpha + NAD(+) = biliverdin IXalpha + NADH + H(+). The enzyme catalyses (4Z,15Z)-bilirubin IXalpha + NADP(+) = biliverdin IXalpha + NADPH + H(+). Its pathway is porphyrin-containing compound metabolism; protoheme degradation. Its function is as follows. Reduces the gamma-methene bridge of the open tetrapyrrole, biliverdin IXalpha, to bilirubin with the concomitant oxidation of a NADH or NADPH cofactor. Does not reduce bilirubin IXbeta. Uses the reactants NADH or NADPH depending on the pH; NADH is used at the acidic pH range (6-6.9) and NADPH at the alkaline range (8.5-8.7). NADPH, however, is the probable reactant in biological systems. The protein is Biliverdin reductase A of Homo sapiens (Human).